We begin with the raw amino-acid sequence, 94 residues long: Non-specific lipid-transfer protein 1 (94 aa).

4 cysteine pairs are disulfide-bonded: Cys-4/Cys-53, Cys-14/Cys-30, Cys-31/Cys-76, and Cys-51/Cys-90.

Functionally, plant non-specific lipid-transfer proteins transfer phospholipids as well as galactolipids across membranes. May play a role in wax or cutin deposition in the cell walls of expanding epidermal cells and certain secretory tissues. This Amaranthus hypochondriacus (Prince-of-Wales feather) protein is Non-specific lipid-transfer protein 1.